Reading from the N-terminus, the 327-residue chain is Cyclic AMP-responsive element-binding protein 1 (327 aa).

2 disordered regions span residues 1-29 (MTMDSGADNQQSGDAAVTEAESQQMTVQA) and 94-113 (SEDSQESVDSVTDSQKRREI). The KID domain maps to 8-146 (DNQQSGDAAV…IEEEKSEEET (139 aa)). Residues 20–29 (AESQQMTVQA) are compositionally biased toward polar residues. Serine 119 carries the post-translational modification Phosphoserine; by CaMK1, CaMK2, CaMK4, PKB/AKT1 or PKB/AKT2, RPS6KA3, RPS6KA4, RPS6KA5 and SGK1. Lysine 122 participates in a covalent cross-link: Glycyl lysine isopeptide (Lys-Gly) (interchain with G-Cter in SUMO2). The tract at residues 126 to 149 (DLSSDAPGVPRIEEEKSEEETSAP) is disordered. Serine 128 is subject to Phosphoserine; by CaMK2. At serine 257 the chain carries Phosphoserine; by HIPK2. The bZIP domain maps to 269-327 (ARKREVRLMKNREAARECRRKKKEYVKCLENRVAVLENQNKTLIEELKALKDLYCHKSD). The tract at residues 270–295 (RKREVRLMKNREAARECRRKKKEYVK) is basic motif. Residues lysine 271 and lysine 290 each participate in a glycyl lysine isopeptide (Lys-Gly) (interchain with G-Cter in SUMO1) cross-link. A leucine-zipper region spans residues 297–318 (LENRVAVLENQNKTLIEELKAL).

It belongs to the bZIP family. Interacts with PPRC1. Binds DNA as a dimer. This dimer is stabilized by magnesium ions. Interacts, through the bZIP domain, with the coactivators CRTC1/TORC1, CRTC2/TORC2 and CRTC3/TORC3. When phosphorylated on Ser-119, binds CREBBP. Interacts with CREBL2; regulates CREB1 phosphorylation, stability and transcriptional activity. Interacts (phosphorylated form) with TOX3. Interacts with ARRB1. Binds to HIPK2. Interacts with SGK1. Interacts with TSSK4; this interaction facilitates phosphorylation on Ser-119. Forms a complex with KMT2A and CREBBP. Interacts with TOX4; CREB1 is required for full induction of TOX4-dependent activity and the interaction is increased by cAMP and inhibited by insulin. Phosphorylation of Ser-119 allows CREBBP binding. Stimulated by phosphorylation. Phosphorylation of both Ser-128 and Ser-119 in the SCN regulates the activity of CREB and participate in circadian rhythm generation. Phosphorylated upon calcium influx by CaMK4 and CaMK2 on Ser-119. CaMK4 is much more potent than CaMK2 in activating CREB. Phosphorylated by CaMK2 on Ser-128. Phosphorylation of Ser-128 blocks CREB-mediated transcription even when Ser-119 is phosphorylated. Phosphorylated by CaMK1. Phosphorylation of Ser-257 by HIPK2 in response to genotoxic stress promotes CREB1 activity, facilitating the recruitment of the coactivator CBP. Phosphorylated at Ser-119 by RPS6KA3, RPS6KA4 and RPS6KA5 in response to mitogenic or stress stimuli. CREBL2 positively regulates phosphorylation at Ser-119 thereby stimulating CREB1 transcriptional activity. In liver, phosphorylation is induced by fasting or glucagon in a circadian fashion. Phosphorylated by TSSK4 on Ser-119. In terms of processing, sumoylated with SUMO1. Sumoylation on Lys-290, but not on Lys-271, is required for nuclear localization of this protein. Sumoylation is enhanced under hypoxia, promoting nuclear localization and stabilization.

The protein resides in the nucleus. Functionally, phosphorylation-dependent transcription factor that stimulates transcription upon binding to the DNA cAMP response element (CRE), a sequence present in many viral and cellular promoters. Transcription activation is enhanced by the TORC coactivators which act independently of Ser-119 phosphorylation. Involved in different cellular processes including the synchronization of circadian rhythmicity and the differentiation of adipose cells. Regulates the expression of apoptotic and inflammatory response factors in cardiomyocytes in response to ERFE-mediated activation of AKT signaling. The protein is Cyclic AMP-responsive element-binding protein 1 (Creb1) of Rattus norvegicus (Rat).